We begin with the raw amino-acid sequence, 467 residues long: Megakaryocyte-associated tyrosine-protein kinase (467 aa).

The tract at residues 1 to 20 is disordered; it reads MPTQRWAPGTQCMTKCENSR. The region spanning 7 to 69 is the SH3 domain; that stretch reads APGTQCMTKC…AAAALRQREA (63 aa). Residues 81–170 form the SH2 domain; it reads WFHGKISGQE…AICTKLVKPK (90 aa). In terms of domain architecture, Protein kinase spans 194-443; the sequence is LTLGAQIGEG…IVEKLGRELR (250 aa). ATP contacts are provided by residues 200 to 208 and Lys-221; that span reads IGEGEFGAV. The active-site Proton acceptor is the Asp-311. The segment at 445–467 is disordered; it reads VGVAAPAGGQEAEGSAPTRSQDP.

Belongs to the protein kinase superfamily. Tyr protein kinase family. CSK subfamily. In terms of assembly, interacts with KIT. In terms of tissue distribution, enriched in lymphoid tissues.

It localises to the cytoplasm. Its subcellular location is the membrane. The catalysed reaction is L-tyrosyl-[protein] + ATP = O-phospho-L-tyrosyl-[protein] + ADP + H(+). Could play a significant role in the signal transduction of hematopoietic cells. May regulate tyrosine kinase activity of SRC-family members in brain. This is Megakaryocyte-associated tyrosine-protein kinase (Matk) from Rattus norvegicus (Rat).